The chain runs to 85 residues: Cell division topological specificity factor (85 aa).

Belongs to the MinE family.

Functionally, prevents the cell division inhibition by proteins MinC and MinD at internal division sites while permitting inhibition at polar sites. This ensures cell division at the proper site by restricting the formation of a division septum at the midpoint of the long axis of the cell. The protein is Cell division topological specificity factor of Deinococcus geothermalis (strain DSM 11300 / CIP 105573 / AG-3a).